Reading from the N-terminus, the 603-residue chain is Aspartate--tRNA(Asp/Asn) ligase (603 aa).

The tract at residues 205–208 is aspartate; the sequence is QLFK. L-aspartate is bound at residue R227. Residues 227-229 and Q236 contribute to the ATP site; that span reads RDE. An L-aspartate-binding site is contributed by H463. Residue E497 participates in ATP binding. R504 lines the L-aspartate pocket. 549 to 552 provides a ligand contact to ATP; the sequence is GMDR.

It belongs to the class-II aminoacyl-tRNA synthetase family. Type 1 subfamily. In terms of assembly, homodimer.

It localises to the cytoplasm. The catalysed reaction is tRNA(Asx) + L-aspartate + ATP = L-aspartyl-tRNA(Asx) + AMP + diphosphate. In terms of biological role, aspartyl-tRNA synthetase with relaxed tRNA specificity since it is able to aspartylate not only its cognate tRNA(Asp) but also tRNA(Asn). Reaction proceeds in two steps: L-aspartate is first activated by ATP to form Asp-AMP and then transferred to the acceptor end of tRNA(Asp/Asn). The polypeptide is Aspartate--tRNA(Asp/Asn) ligase (Anaeromyxobacter dehalogenans (strain 2CP-C)).